The primary structure comprises 160 residues: Serine-protein kinase RsbW (160 aa).

It belongs to the anti-sigma-factor family.

It carries out the reaction L-seryl-[protein] + ATP = O-phospho-L-seryl-[protein] + ADP + H(+). It catalyses the reaction L-threonyl-[protein] + ATP = O-phospho-L-threonyl-[protein] + ADP + H(+). Functionally, negative regulator of sigma-B activity. Phosphorylates and inactivates its specific antagonist protein, RsbV. Upon phosphorylation of RsbV, RsbW is released and binds to sigma-B, thereby blocking its ability to form an RNA polymerase holoenzyme (E-sigma-B). In Bacillus cereus (strain B4264), this protein is Serine-protein kinase RsbW.